The following is a 307-amino-acid chain: Ribosomal RNA small subunit methyltransferase H (307 aa).

Residues 38-40, Asp-58, Phe-82, Asp-99, and Gln-106 each bind S-adenosyl-L-methionine; that span reads GGH.

Belongs to the methyltransferase superfamily. RsmH family.

The protein resides in the cytoplasm. The catalysed reaction is cytidine(1402) in 16S rRNA + S-adenosyl-L-methionine = N(4)-methylcytidine(1402) in 16S rRNA + S-adenosyl-L-homocysteine + H(+). Specifically methylates the N4 position of cytidine in position 1402 (C1402) of 16S rRNA. In Variovorax paradoxus (strain S110), this protein is Ribosomal RNA small subunit methyltransferase H.